The following is a 249-amino-acid chain: Uroplakin-3b-like protein 1 (249 aa).

A signal peptide spans methionine 1–glycine 26. The Extracellular segment spans residues leucine 27–valine 194. Residues asparagine 63, asparagine 82, and asparagine 133 are each glycosylated (N-linked (GlcNAc...) asparagine). The helical transmembrane segment at isoleucine 195–isoleucine 215 threads the bilayer. Residues serine 216–serine 249 are Cytoplasmic-facing.

Belongs to the uroplakin-3 family.

Its subcellular location is the membrane. The sequence is that of Uroplakin-3b-like protein 1 from Mus musculus (Mouse).